Consider the following 458-residue polypeptide: COBRA-like protein 2 (458 aa).

A signal peptide spans 1–29 (MARFLLGAAAIALLAGVSSLLLMVPFAEA). Residues asparagine 38, asparagine 163, asparagine 171, asparagine 211, asparagine 236, asparagine 318, asparagine 333, and asparagine 352 are each glycosylated (N-linked (GlcNAc...) asparagine). A helical membrane pass occupies residues 430–450 (VFLLMSFLVCGTLAFLHNHLV).

It belongs to the COBRA family.

Its subcellular location is the membrane. This is COBRA-like protein 2 (BC1L2) from Oryza sativa subsp. japonica (Rice).